Here is a 302-residue protein sequence, read N- to C-terminus: MRIVLITGISGSGKSVALNALEDAGYYCVDNLPPHVLPELARYLAEEGQHRLAVAIDARSSASLDEMPGLIRALSLEHDVRVLFLNASTQSLIQRFSETRRRHPLSGSPSHDANVGLLSSLEEAIERERELVAPLAEFGHQIDTSTLRANVLRTWVKRFIEQKNNDLMVMFESFGFKRGVPLDADLMFDVRALPNPYYDHELRPLTGLDQPVIAFLDALPIVHQMIDDIHAFLMKWLPHFREDNRSYLTVAIGCTGGQHRSVFIAETLAARLAHDANVIVRHRDAPVDVDASSRLVADVHRP.

Residue 8 to 15 (GISGSGKS) participates in ATP binding. GTP is bound at residue 57-60 (DARS).

Belongs to the RapZ-like family.

Functionally, displays ATPase and GTPase activities. In Burkholderia vietnamiensis (strain G4 / LMG 22486) (Burkholderia cepacia (strain R1808)), this protein is Nucleotide-binding protein Bcep1808_2900.